Reading from the N-terminus, the 428-residue chain is C4-dicarboxylate transport protein (428 aa).

The next 9 membrane-spanning stretches (helical) occupy residues 8–28 (SLYFQVLTAIAIGILLGHFYP), 44–64 (LIKMIIAPVIFCTVVTGIAGM), 76–96 (VALLYFEIVSTIALIIGLVIV), 142–162 (IGAFASGNILQVLLFAVLFGF), 184–204 (VIFGIINMIMRLAPIGAFGAM), 222–242 (LIVCFYITCILFVVVVLGSIA), 289–309 (VVGLVIPTGYSFNLDGTSIYL), 326–346 (IFHQITLLVVLLLSSKGAAGV), and 352–372 (IVLAATISAVGHLPVAGLALI).

Belongs to the dicarboxylate/amino acid:cation symporter (DAACS) (TC 2.A.23) family.

The protein resides in the cell inner membrane. Responsible for the transport of dicarboxylates such as succinate, fumarate, and malate from the periplasm across the membrane. This chain is C4-dicarboxylate transport protein, found in Cronobacter sakazakii (strain ATCC BAA-894) (Enterobacter sakazakii).